The chain runs to 35 residues: Non-specific lipid-transfer protein 1 (35 aa).

A disulfide bond links C13 and C28.

As to expression, seeds.

Functionally, plant non-specific lipid-transfer proteins transfer phospholipids as well as galactolipids across membranes. May play a role in wax or cutin deposition in the cell walls of expanding epidermal cells and certain secretory tissues. Inhibits the growth of F.oxysporum and P.infestans. The polypeptide is Non-specific lipid-transfer protein 1 (Nigella sativa (Black cumin)).